The following is a 2312-amino-acid chain: Protein Ycf2 (2312 aa).

Disordered stretches follow at residues 170 to 191, 223 to 253, and 942 to 1009; these read SSQLKGSSDQSRDHFDSIGTED, TEIESDRFSKGLSGSSSKSRLFTEGEKEMNN, and KRKK…KRKE. The span at 232-242 shows a compositional bias: low complexity; sequence KGLSGSSSKSR. Composition is skewed to basic and acidic residues over residues 243 to 252 and 950 to 1007; these read LFTEGEKEMN and KRKE…PEKR. ATP is bound at residue 1439 to 1446; that stretch reads GSIGSGRS. 3 disordered regions span residues 1513-1532, 1857-1983, and 2050-2166; these read YEDRDSDDYEPGASDDYEPG, LVGS…LLRP, and PAEE…DGFS. Residues 1863-1963 are compositionally biased toward acidic residues; that stretch reads TEEEVEGTEE…GEGTEDEEVE (101 aa). The segment covering 1964–1976 has biased composition (basic and acidic residues); it reads GTEKDSSQFDNDR. 2 stretches are compositionally biased toward acidic residues: residues 2050-2067 and 2074-2149; these read PAEEIPEEEDPLPEEALE and GEEE…ENDS.

Belongs to the Ycf2 family.

The protein localises to the plastid. It is found in the chloroplast stroma. Functionally, probable ATPase of unknown function. Its presence in a non-photosynthetic plant (Epifagus virginiana) and experiments in tobacco indicate that it has an essential function which is probably not related to photosynthesis. The chain is Protein Ycf2 from Oenothera parviflora (Small-flowered evening primrose).